A 330-amino-acid chain; its full sequence is G-protein coupled bile acid receptor 1 (330 aa).

Residues 1–19 (MTPNSTGEVPGPIPRGALE) are Extracellular-facing. N-linked (GlcNAc...) asparagine glycosylation is present at Asn4. A helical transmembrane segment spans residues 20-40 (LSLALASLIIAANLLLALGIA). At 41–50 (CDRRLRSPPA) the chain is on the cytoplasmic side. Residues 51-71 (GCFFLSLLLAGLLTGLALPTL) form a helical membrane-spanning segment. The Extracellular portion of the chain corresponds to 72–85 (PGLWRQSHRGYWSC). Cys85 and Cys155 are oxidised to a cystine. Residues 86 to 106 (LLVYLAPNFSFLSLLANLLLV) traverse the membrane as a helical segment. Topologically, residues 107 to 125 (HGERYVAVLRPLQPPGSIR) are cytoplasmic. Residues 126 to 146 (LALLLTWTGPLLFASLPALGW) traverse the membrane as a helical segment. Over 147-169 (NHWGPEANCSSQTIFPAPYLYLE) the chain is Extracellular. Asn154 is a glycosylation site (N-linked (GlcNAc...) asparagine). Residues 170-190 (VYGLLLPAVGAAALLSAHVLL) form a helical membrane-spanning segment. The Cytoplasmic portion of the chain corresponds to 191–230 (AAHRQLQDIRRLERAVCRDAPSALARALTWRQARAQAGAT). Residues 231-251 (LLFGLCWGPYVATLFLSVLAY) form a helical membrane-spanning segment. Residues 252–261 (EQRPPLGPGT) are Extracellular-facing. A helical membrane pass occupies residues 262-282 (LLSLLSLGSASAAAVPVAMGL). Over 283-330 (GDHRYTAPWRAAARRWLRGLRGRGSQASPGPSTAYHTSSQSSVDVDLN) the chain is Cytoplasmic. Positions 304–330 (GRGSQASPGPSTAYHTSSQSSVDVDLN) are disordered. The span at 307 to 330 (SQASPGPSTAYHTSSQSSVDVDLN) shows a compositional bias: polar residues.

Belongs to the G-protein coupled receptor 1 family. In terms of tissue distribution, expressed at high level in spleen. Expressed at lower level in thymus, heart, lung, liver, kidney, ileum, blood and adherent alveolar macrophage cells.

The protein localises to the cell membrane. In terms of biological role, receptor for bile acid. Bile-acid binding induces its internalization, activation of extracellular signal-regulated kinase and intracellular cAMP production. May be involved in the suppression of macrophage functions by bile acids. Involved in bile acid promoted GLP1R secretion. The polypeptide is G-protein coupled bile acid receptor 1 (GPBAR1) (Oryctolagus cuniculus (Rabbit)).